Here is an 84-residue protein sequence, read N- to C-terminus: MSGRVQKVMIPPINFIFKLLQQHTPVSIWLFEQTDIRLQGQIRGFDEFMNIVLDDAVQVDAKNNKRELGRILLKGDNITLIQAI.

In terms of domain architecture, Sm spans 13–84 (INFIFKLLQQ…GDNITLIQAI (72 aa)).

Belongs to the snRNP Sm proteins family. Component of the Sm core complex, present in spliceosomal snRNP U1, U2, U4/U6 and U5. The core complex contains smb1, smd1, smd2, smd3, sme1, smf1 and smg1 (Sm proteins B, D1, D2, D3, E, F and G, respectively), and is probably a heptameric ring structure.

Its subcellular location is the cytoplasm. It localises to the nucleus. Involved in pre-mRNA splicing. Binds and is required for the stability of snRNA U1, U2, U4 and U5 which contain a highly conserved structural motif called the Sm binding site. Involved in cap modification. The sequence is that of Small nuclear ribonucleoprotein E from Schizosaccharomyces pombe (strain 972 / ATCC 24843) (Fission yeast).